Here is a 216-residue protein sequence, read N- to C-terminus: Elongation factor 1-beta (216 aa).

Positions 71 to 131 are disordered; that stretch reads GQASGVSASS…AKKKESGKSS (61 aa). The segment covering 73–89 has biased composition (low complexity); the sequence is ASGVSASSAPAAAAPAA. Residues 92–107 are compositionally biased toward acidic residues; sequence DEDDDDDMDLFGDETE. Residues 108-128 are compositionally biased toward basic and acidic residues; it reads EDKKAAAEREAAKPAKKKESG.

The protein belongs to the EF-1-beta/EF-1-delta family. As to quaternary structure, EF-1 is composed of 4 subunits: alpha, beta (1B-alpha=beta'), delta (1B-beta), and gamma (1B-gamma).

In terms of biological role, EF-1-beta and EF-1-beta' stimulate the exchange of GDP bound to EF-1-alpha to GTP. This is Elongation factor 1-beta from Triticum aestivum (Wheat).